Here is a 290-residue protein sequence, read N- to C-terminus: uncharacterized protein (290 aa).

This is an uncharacterized protein from Escherichia coli (strain K12).